The sequence spans 364 residues: tRNA-specific 2-thiouridylase MnmA 1 (364 aa).

Residues 10–17 and Met36 contribute to the ATP site; that span reads GMSGGVDS. Cys106 acts as the Nucleophile in catalysis. Cys106 and Cys204 are joined by a disulfide. Gly130 is a binding site for ATP. The segment at 154–156 is interaction with tRNA; sequence KDQ. Catalysis depends on Cys204, which acts as the Cysteine persulfide intermediate. An interaction with tRNA region spans residues 310 to 311; the sequence is RY.

This sequence belongs to the MnmA/TRMU family.

It is found in the cytoplasm. It carries out the reaction S-sulfanyl-L-cysteinyl-[protein] + uridine(34) in tRNA + AH2 + ATP = 2-thiouridine(34) in tRNA + L-cysteinyl-[protein] + A + AMP + diphosphate + H(+). Catalyzes the 2-thiolation of uridine at the wobble position (U34) of tRNA, leading to the formation of s(2)U34. This Caldanaerobacter subterraneus subsp. tengcongensis (strain DSM 15242 / JCM 11007 / NBRC 100824 / MB4) (Thermoanaerobacter tengcongensis) protein is tRNA-specific 2-thiouridylase MnmA 1.